We begin with the raw amino-acid sequence, 143 residues long: Synuclein (143 aa).

3 tandem repeats follow at residues 20–30 (EKTKQGVQDAA), 31–41 (EKTKQGVQDAA), and 42–52 (EKTKEGVMYVG). Positions 20–78 (EKTKQGVQDAAEKTKQGVQDAAEKTKEGVMYVGTKTKEGVVQSVNTVTEKTKEQANVVG) are 5 X 11 AA tandem repeats of [EGST]-K-T-K-[EQ]-[GQ]-[VA]-X(4). The 4; approximate repeat unit spans residues 53–67 (TKTKEGVVQSVNTVT). Repeat 5 spans residues 68 to 78 (EKTKEQANVVG). The interval 113 to 143 (REIPAEQVAEGKQTTQEPLVEATEATEETGK) is disordered.

It belongs to the synuclein family. In terms of tissue distribution, nervous system tissue. Found in the electric lobe, the brain and the spinal cord.

Its subcellular location is the nucleus. Its function is as follows. May have a role in synaptic regulation or signal transduction. This chain is Synuclein, found in Tetronarce californica (Pacific electric ray).